The chain runs to 408 residues: Eukaryotic initiation factor 4A-II (408 aa).

The segment at 1–22 (MSGGSADYNSREHGGPEGMDPD) is disordered. Positions 34-62 (DNFDDMNLKESLLRGIYAYGFEKPSAIQQ) match the Q motif motif. The Helicase ATP-binding domain occupies 65-236 (IIPCIKGYDV…KKFMRDPIRI (172 aa)). Residue 77-84 (QAQSGTGK) coordinates ATP. Residue threonine 160 is modified to Phosphothreonine. A DEAD box motif is present at residues 183–186 (LDEA). Positions 247–408 (GIKQFYINVE…EMPMNVADLI (162 aa)) constitute a Helicase C-terminal domain.

It belongs to the DEAD box helicase family. eIF4A subfamily. In terms of assembly, eIF4F is a multi-subunit complex, the composition of which varies with external and internal environmental conditions. It is composed of at least EIF4A, EIF4E and EIF4G1/EIFFG3. Interacts with EIF4E. May interact with NOM1.

The enzyme catalyses ATP + H2O = ADP + phosphate + H(+). In terms of biological role, ATP-dependent RNA helicase which is a subunit of the eIF4F complex involved in cap recognition and is required for mRNA binding to ribosome. In the current model of translation initiation, eIF4A unwinds RNA secondary structures in the 5'-UTR of mRNAs which is necessary to allow efficient binding of the small ribosomal subunit, and subsequent scanning for the initiator codon. The polypeptide is Eukaryotic initiation factor 4A-II (EIF4A2) (Macaca fascicularis (Crab-eating macaque)).